The sequence spans 378 residues: N-acetyldiaminopimelate deacetylase (378 aa).

D65 is a catalytic residue. E124 (proton acceptor) is an active-site residue.

Belongs to the peptidase M20A family. N-acetyldiaminopimelate deacetylase subfamily.

It catalyses the reaction N-acetyl-(2S,6S)-2,6-diaminopimelate + H2O = (2S,6S)-2,6-diaminopimelate + acetate. It functions in the pathway amino-acid biosynthesis; L-lysine biosynthesis via DAP pathway; LL-2,6-diaminopimelate from (S)-tetrahydrodipicolinate (acetylase route): step 3/3. Functionally, catalyzes the conversion of N-acetyl-diaminopimelate to diaminopimelate and acetate. This is N-acetyldiaminopimelate deacetylase from Anoxybacillus flavithermus (strain DSM 21510 / WK1).